A 149-amino-acid polypeptide reads, in one-letter code: Calmodulin (149 aa).

An N-acetylalanine modification is found at A2. EF-hand domains are found at residues E8–N43, P44–D79, D81–K116, and L117–K149. Residues D21, D23, D25, S27, E32, D57, D59, N61, T63, E68, D94, D96, N98, Y100, and D105 each coordinate Ca(2+). K116 bears the N6,N6,N6-trimethyllysine mark. Residues D130, D132, D134, Q136, and E141 each contribute to the Ca(2+) site.

This sequence belongs to the calmodulin family.

Functionally, calmodulin mediates the control of a large number of enzymes, ion channels and other proteins by Ca(2+). Among the enzymes to be stimulated by the calmodulin-Ca(2+) complex are a number of protein kinases and phosphatases. The chain is Calmodulin from Mougeotia scalaris (Green alga).